The sequence spans 28 residues: Beta-bungarotoxin B chain-like (28 aa).

An N-terminal signal peptide occupies residues 1-24; it reads MSSGGLLLLLGLLTLCAELTPVSS.

In terms of assembly, heterodimer; disulfide-linked. The A chains have phospholipase A2 activity and the B chains show homology with the basic protease inhibitors. Expressed by the venom gland.

It localises to the secreted. Functionally, beta-1-bungarotoxin is a presynaptic neurotoxin of the venom. The B chain is homologous to venom basic protease inhibitors but has no protease inhibitor activity and blocks voltage-gated potassium channels (Kv). The sequence is that of Beta-bungarotoxin B chain-like from Bungarus multicinctus (Many-banded krait).